A 420-amino-acid polypeptide reads, in one-letter code: ATP-dependent Clp protease ATP-binding subunit ClpX (420 aa).

The ClpX-type ZB domain maps to K3–H57. The Zn(2+) site is built by C16, C19, C38, and C41. P122–L129 serves as a coordination point for ATP.

This sequence belongs to the ClpX chaperone family. Component of the ClpX-ClpP complex. Forms a hexameric ring that, in the presence of ATP, binds to fourteen ClpP subunits assembled into a disk-like structure with a central cavity, resembling the structure of eukaryotic proteasomes.

Functionally, ATP-dependent specificity component of the Clp protease. It directs the protease to specific substrates. Can perform chaperone functions in the absence of ClpP. This is ATP-dependent Clp protease ATP-binding subunit ClpX from Leptospira borgpetersenii serovar Hardjo-bovis (strain L550).